Reading from the N-terminus, the 382-residue chain is Secreted RxLR effector protein 118 (382 aa).

An N-terminal signal peptide occupies residues 1–21 (MRGAYYVTIALLVVASSQISA). The RxLR-dEER motif lies at 48 to 65 (RSLRGSRDVSNDVAIEER). The disordered stretch occupies residues 308–382 (MNKASTSKGK…AVTSLSSISN (75 aa)). The span at 310-323 (KASTSKGKSSVFTR) shows a compositional bias: polar residues.

The protein belongs to the RxLR effector family.

Its subcellular location is the secreted. The protein localises to the host nucleus. Secreted effector that completely suppresses the host cell death induced by cell death-inducing proteins. The polypeptide is Secreted RxLR effector protein 118 (Plasmopara viticola (Downy mildew of grapevine)).